A 127-amino-acid polypeptide reads, in one-letter code: Small ribosomal subunit protein uS12 (127 aa).

Position 89 is a 3-methylthioaspartic acid (Asp89). Residues 101–127 (ALDTSGVAGRTQRRSKYGAKRPKEAKK) form a disordered region. Over residues 111-127 (TQRRSKYGAKRPKEAKK) the composition is skewed to basic residues.

It belongs to the universal ribosomal protein uS12 family. Part of the 30S ribosomal subunit. Contacts proteins S8 and S17. May interact with IF1 in the 30S initiation complex.

Its function is as follows. With S4 and S5 plays an important role in translational accuracy. In terms of biological role, interacts with and stabilizes bases of the 16S rRNA that are involved in tRNA selection in the A site and with the mRNA backbone. Located at the interface of the 30S and 50S subunits, it traverses the body of the 30S subunit contacting proteins on the other side and probably holding the rRNA structure together. The combined cluster of proteins S8, S12 and S17 appears to hold together the shoulder and platform of the 30S subunit. The protein is Small ribosomal subunit protein uS12 of Flavobacterium psychrophilum (strain ATCC 49511 / DSM 21280 / CIP 103535 / JIP02/86).